Reading from the N-terminus, the 981-residue chain is GPI ethanolamine phosphate transferase 1 (981 aa).

Over 1-6 (MAGSSR) the chain is Cytoplasmic. Residues 7–27 (IGFMAIAVAFHLVYILSIFDI) traverse the membrane as a helical segment. At 28–464 (YFVSPIVTGM…LQTYDWLFLR (437 aa)) the chain is on the lumenal side. N-linked (GlcNAc...) asparagine glycans are attached at residues N148, N211, and N295. The chain crosses the membrane as a helical span at residues 465–485 (ALITIGYLGWMAYATTTVLSL). Residues 486-496 (YVVKESMSPQR) are Cytoplasmic-facing. A helical membrane pass occupies residues 497–517 (TLLGSAFFLSLLVALYSSFII). At 518 to 519 (SK) the chain is on the lumenal side. Residues 520–540 (SPPAYYLYAFFPVLFWEEVYA) traverse the membrane as a helical segment. Residues 541–560 (RRANVAKGFQALFGHVKSGG) lie on the Cytoplasmic side of the membrane. A helical membrane pass occupies residues 561 to 581 (AVVALVFNVVLYLGVIQSLAL). At 582–587 (AYIHRE) the chain is on the lumenal side. A helical transmembrane segment spans residues 588–608 (ILTGLFVLGAFWPMTQGISFL). Residues 609–611 (RSH) are Cytoplasmic-facing. The chain crosses the membrane as a helical span at residues 612-632 (LFLSMLWFFSCLAMSTFTLLP). Residues 633 to 638 (AMKVED) lie on the Lumenal side of the membrane. A helical membrane pass occupies residues 639–659 (IPLIMAGGGLMTFVGLAYLVL). Topologically, residues 660-681 (EDFILSDVSSSKTKLKRLHTSR) are cytoplasmic. A helical transmembrane segment spans residues 682-702 (TLLGIQVGLIILAMLVTHSSA). Residues 703–708 (TSLQAK) lie on the Lumenal side of the membrane. Residues 709 to 729 (LGLPKGNQIVGWFVLVTSLLM) form a helical membrane-spanning segment. Residues 730–744 (PLAYRLQPNSHYMHR) lie on the Cytoplasmic side of the membrane. A helical transmembrane segment spans residues 745–767 (LAIIFLTCAPTFVILTISYEGLF). The Lumenal segment spans residues 768 to 819 (YVAFSITLLSWVRLEYAVDAFTQEKAKKQATVAGSQQHTPSTFRPLSLSDAR). A helical transmembrane segment spans residues 820–840 (IALFFMVLLQSAFFSTGNIAS). At 841–862 (ISSFSLESVSRLIPVFDPFSQG) the chain is on the cytoplasmic side. A helical membrane pass occupies residues 863–883 (ALLILKIIIPFFLISANLGVL). The Lumenal portion of the chain corresponds to 884–892 (NKRLGVAPS). Residues 893-913 (AIFMVVLTASDVLTLYFFWVV) traverse the membrane as a helical segment. Over 914–929 (KDEGSWLEIGSTITHF) the chain is Cytoplasmic. Residues 930–950 (AIASFLCVFVAALEFVSAAFI) form a helical membrane-spanning segment. Over 951-981 (AGIEVEDTKSAALTSASTKADEKVPPVAGAE) the chain is Lumenal.

It belongs to the PIGG/PIGN/PIGO family. PIGN subfamily.

It localises to the endoplasmic reticulum membrane. It participates in glycolipid biosynthesis; glycosylphosphatidylinositol-anchor biosynthesis. In terms of biological role, ethanolamine phosphate transferase involved in glycosylphosphatidylinositol-anchor biosynthesis. Transfers ethanolamine phosphate to the first alpha-1,4-linked mannose of the glycosylphosphatidylinositol precursor of GPI-anchor. This Gibberella zeae (strain ATCC MYA-4620 / CBS 123657 / FGSC 9075 / NRRL 31084 / PH-1) (Wheat head blight fungus) protein is GPI ethanolamine phosphate transferase 1 (MCD4).